Consider the following 128-residue polypeptide: ATP synthase epsilon chain (128 aa).

The interval 98-128 is disordered; sequence EALDMPSSTPEQAQIKDAAVRRARGQLRASR. A compositionally biased stretch (basic residues) spans 118 to 128; sequence RRARGQLRASR.

It belongs to the ATPase epsilon chain family. In terms of assembly, F-type ATPases have 2 components, CF(1) - the catalytic core - and CF(0) - the membrane proton channel. CF(1) has five subunits: alpha(3), beta(3), gamma(1), delta(1), epsilon(1). CF(0) has three main subunits: a, b and c.

Its subcellular location is the cell inner membrane. Functionally, produces ATP from ADP in the presence of a proton gradient across the membrane. The polypeptide is ATP synthase epsilon chain (Rhodopirellula baltica (strain DSM 10527 / NCIMB 13988 / SH1)).